Consider the following 1203-residue polypeptide: uncharacterized protein (1203 aa).

This is an uncharacterized protein from Magallana gigas (Pacific oyster).